Consider the following 177-residue polypeptide: Large ribosomal subunit protein bL9 (177 aa).

It belongs to the bacterial ribosomal protein bL9 family.

Functionally, binds to the 23S rRNA. The sequence is that of Large ribosomal subunit protein bL9 from Rhodopirellula baltica (strain DSM 10527 / NCIMB 13988 / SH1).